The chain runs to 458 residues: Phosphoglucosamine mutase (458 aa).

Ser108 acts as the Phosphoserine intermediate in catalysis. Residues Ser108, Asp247, Asp249, and Asp251 each contribute to the Mg(2+) site. Residue Ser108 is modified to Phosphoserine.

The protein belongs to the phosphohexose mutase family. It depends on Mg(2+) as a cofactor. Post-translationally, activated by phosphorylation.

The enzyme catalyses alpha-D-glucosamine 1-phosphate = D-glucosamine 6-phosphate. In terms of biological role, catalyzes the conversion of glucosamine-6-phosphate to glucosamine-1-phosphate. In Thiobacillus denitrificans (strain ATCC 25259 / T1), this protein is Phosphoglucosamine mutase.